Here is a 231-residue protein sequence, read N- to C-terminus: Ribonuclease HII (231 aa).

Residues E38 to L227 form the RNase H type-2 domain. Positions 44, 45, and 136 each coordinate a divalent metal cation.

It belongs to the RNase HII family. It depends on Mn(2+) as a cofactor. Mg(2+) is required as a cofactor.

The protein localises to the cytoplasm. The enzyme catalyses Endonucleolytic cleavage to 5'-phosphomonoester.. Endonuclease that specifically degrades the RNA of RNA-DNA hybrids. In Carboxydothermus hydrogenoformans (strain ATCC BAA-161 / DSM 6008 / Z-2901), this protein is Ribonuclease HII.